Consider the following 638-residue polypeptide: Acetolactate synthase 1, chloroplastic (638 aa).

The segment covering 1-19 (MATAAAASTALTGATTAAP) has biased composition (low complexity). Residues 1 to 23 (MATAAAASTALTGATTAAPKARR) are disordered. The transit peptide at 1–39 (MATAAAASTALTGATTAAPKARRRAHLLATRRALAAPIR) directs the protein to the chloroplast. Glutamate 112 contributes to the thiamine diphosphate binding site. A disulfide bridge connects residues cysteine 132 and cysteine 278. FAD contacts are provided by residues arginine 214, 320–341 (HGTVYANYAVDKADLLLALGVR), and 363–382 (DIDPAEIGKNKQPHVSICAD). Residues 455–535 (QHQMWAAQYY…VKVFVLNNQH (81 aa)) are thiamine pyrophosphate binding. Residues aspartate 506 and asparagine 533 each coordinate Mg(2+).

This sequence belongs to the TPP enzyme family. Requires Mg(2+) as cofactor. Thiamine diphosphate serves as cofactor.

Its subcellular location is the plastid. It localises to the chloroplast. The enzyme catalyses 2 pyruvate + H(+) = (2S)-2-acetolactate + CO2. It participates in amino-acid biosynthesis; L-isoleucine biosynthesis; L-isoleucine from 2-oxobutanoate: step 1/4. The protein operates within amino-acid biosynthesis; L-valine biosynthesis; L-valine from pyruvate: step 1/4. The sequence is that of Acetolactate synthase 1, chloroplastic (ALS1) from Zea mays (Maize).